A 211-amino-acid polypeptide reads, in one-letter code: Adenylate kinase (211 aa).

10–15 (GSGKGT) is an ATP binding site. The tract at residues 30–59 (STGDLFRENILNSTTLGKEIKKIVEKGELV) is NMP. AMP-binding positions include threonine 31, arginine 36, 57 to 59 (ELV), 85 to 88 (GFPR), and glutamine 92. The interval 121–158 (GRRICKSCNNIFNIYTLATKKNGICDVCKGDLYQREDD) is LID. An ATP-binding site is contributed by arginine 122. Residues cysteine 125 and cysteine 128 each coordinate Zn(2+). 131–132 (IF) provides a ligand contact to ATP. Cysteine 145 and cysteine 148 together coordinate Zn(2+). AMP contacts are provided by arginine 155 and arginine 166. Position 194 (valine 194) interacts with ATP.

Belongs to the adenylate kinase family. In terms of assembly, monomer.

It is found in the cytoplasm. The enzyme catalyses AMP + ATP = 2 ADP. Its pathway is purine metabolism; AMP biosynthesis via salvage pathway; AMP from ADP: step 1/1. In terms of biological role, catalyzes the reversible transfer of the terminal phosphate group between ATP and AMP. Plays an important role in cellular energy homeostasis and in adenine nucleotide metabolism. In Borrelia garinii subsp. bavariensis (strain ATCC BAA-2496 / DSM 23469 / PBi) (Borreliella bavariensis), this protein is Adenylate kinase.